A 188-amino-acid chain; its full sequence is MNITATVLLAFGMSMDAFAASIGKGAPLHKPKFSEALRTGLIFGAVETLTPLIGWGMGMLASRFVLEWNHWIAFVLLIFLGGRMIIEGFRGADDEDEEPRRRHGFWLLVTTAIATSLDAMAVGVGLAFLQVNIIATALAIGCATLIMSTLGMMVGRFIGSIIGKKAEILGGLVLIGIGVQILWTHFHG.

The next 5 membrane-spanning stretches (helical) occupy residues 3–23, 66–86, 106–128, 143–163, and 168–188; these read ITAT…ASIG, LEWN…RMII, WLLV…GLAF, ATLI…SIIG, and ILGG…HFHG.

It belongs to the MntP (TC 9.B.29) family.

The protein localises to the cell inner membrane. Its function is as follows. Probably functions as a manganese efflux pump. The protein is Probable manganese efflux pump MntP of Shigella flexneri serotype 5b (strain 8401).